The sequence spans 335 residues: Nuclear envelope-associated protein 2 (335 aa).

2 coiled-coil regions span residues R55 to A85 and C125 to K260. Positions K239–K260 match the Bipartite nuclear localization signal motif. A helical membrane pass occupies residues F312–L329.

Forms homomers and heteromers with NEAP1 and NEAP3. Interacts with SUN1 and SUN2.

It is found in the nucleus inner membrane. The protein localises to the nucleus. Its subcellular location is the nucleoplasm. In Arabidopsis thaliana (Mouse-ear cress), this protein is Nuclear envelope-associated protein 2.